The chain runs to 29 residues: Photosystem I reaction center subunit XII (29 aa).

The helical transmembrane segment at 7 to 26 (IFVALILALFSFVLAIRLGT) threads the bilayer.

This sequence belongs to the PsaM family.

Its subcellular location is the plastid. It localises to the chloroplast thylakoid membrane. In Guillardia theta (Cryptophyte), this protein is Photosystem I reaction center subunit XII.